We begin with the raw amino-acid sequence, 277 residues long: MSGAAFSRQRGQLLSDTLAAAKAEGRSALIAYLPAGFPTVDGGIAAIKAVFDGGADVVEVGLPHSDPVLDGPVIQTADDIALRGGVRIADVMRTVREAHEATGKPVLVMTYWNPIDRYGVERFTAELAEAGGAGCILPDLPVQESALWREHAEKHGLATVFVVAPSSKDARLAEITAAGSGFVYAASLMGVTGTRASVGEQAQDLVRRTRATTDLPVCVGLGVSNATQAAEVAGFADGVIVGSAFVKLMLDAEDEAAGLEAVRALAGELAKGVRGGD.

Residues Glu59 and Asp70 each act as proton acceptor in the active site.

Belongs to the TrpA family. As to quaternary structure, tetramer of two alpha and two beta chains.

The enzyme catalyses (1S,2R)-1-C-(indol-3-yl)glycerol 3-phosphate + L-serine = D-glyceraldehyde 3-phosphate + L-tryptophan + H2O. The protein operates within amino-acid biosynthesis; L-tryptophan biosynthesis; L-tryptophan from chorismate: step 5/5. In terms of biological role, the alpha subunit is responsible for the aldol cleavage of indoleglycerol phosphate to indole and glyceraldehyde 3-phosphate. This chain is Tryptophan synthase alpha chain, found in Streptomyces avermitilis (strain ATCC 31267 / DSM 46492 / JCM 5070 / NBRC 14893 / NCIMB 12804 / NRRL 8165 / MA-4680).